Here is a 217-residue protein sequence, read N- to C-terminus: Large ribosomal subunit protein uL3 (217 aa).

Residues 137–160 (VSASHGSHRNHRKPGSIGASSTPS) form a disordered region.

The protein belongs to the universal ribosomal protein uL3 family. Part of the 50S ribosomal subunit. Forms a cluster with proteins L14 and L19.

Its function is as follows. One of the primary rRNA binding proteins, it binds directly near the 3'-end of the 23S rRNA, where it nucleates assembly of the 50S subunit. This Clavibacter sepedonicus (Clavibacter michiganensis subsp. sepedonicus) protein is Large ribosomal subunit protein uL3.